A 1481-amino-acid polypeptide reads, in one-letter code: DNA excision repair protein ERCC-6 (1481 aa).

Residues 1-506 (MFHEEVPNST…GFLFKKLFKY (506 aa)) are N-terminal domain; essential for its chromatin remodeling activity. Residue S158 is modified to Phosphoserine; by CDK2. K170 bears the N6-methylated lysine; by EHMT2 mark. K256 is covalently cross-linked (Glycyl lysine isopeptide (Lys-Gly) (interchain with G-Cter in SUMO2)). K298 is subject to N6-methylated lysine; by EHMT2. Residues 309-452 (AIETKADQRS…RKVARRQDDG (144 aa)) are disordered. A compositionally biased stretch (basic residues) spans 327-337 (RLKKHSRKLQR). Basic and acidic residues predominate over residues 353–363 (KPLEPEVRPEA). Composition is skewed to acidic residues over residues 378–390 (DGEE…EEEG) and 420–435 (EIDD…EDEA). Residues S428 and S429 each carry the phosphoserine modification. At K444 the chain carries N6-methylated lysine; by EHMT2. A phosphoserine mark is found at S482 and S485. A Helicase ATP-binding domain is found at 515 to 691 (WELHCQQAGG…WSLFDFIFPG (177 aa)). 528-535 (DEMGLGKT) is an ATP binding site. A DEAH box motif is present at residues 642-645 (DEGH). The Helicase C-terminal domain occupies 839-998 (VVESLLKIWH…RRFFKSNDLY (160 aa)). Disordered regions lie at residues 1040–1096 (LGTD…NRAS), 1114–1238 (SVMS…DRSS), and 1307–1372 (GHRG…GAPS). An N6-methylated lysine; by EHMT2 modification is found at K1047. Positions 1138 to 1147 (ASTSEKQGSS) are enriched in polar residues. The segment covering 1192–1201 (QPKQKAKNSK) has biased composition (basic residues). A compositionally biased stretch (basic and acidic residues) spans 1202–1212 (HCRDAKFEGTR). Over residues 1330–1345 (LPVQHPSSLTEKTQNN) the composition is skewed to polar residues. The segment covering 1346-1364 (MKKEGKAHTPEHFSGKEDG) has biased composition (basic and acidic residues). A CSA-interacting motif (CIM) motif is present at residues 1373–1385 (SSSLLARMRARNH). The segment at 1387–1416 (ILPERLESDSEHLAEAAAVPPCGTEHDDLL) is ubiquitin-binding domain (UBD). The winged-helix domain (WHD) stretch occupies residues 1417-1481 (VDMRNFIAFQ…GIWKLKPEYC (65 aa)). The segment at 1434 to 1481 (STQEILQEFESKLSVAQSCVFRELLRNLCNFHRTPGGEGIWKLKPEYC) is essential for its interaction with RNA polymerase II, transcription-coupled nucleotide excision repair activity, association with chromatin after UV irradiation and for mediating the UV-induced translocation of ERRC8 to the nuclear matrix.

The protein belongs to the SNF2/RAD54 helicase family. As to quaternary structure, homodimer. Binds DNA. Interacts with ERCC8. Interacts with RNA polymerase II; interaction is enhanced by UV irradiation. Component of the B-WICH complex, at least composed of SMARCA5/SNF2H, BAZ1B/WSTF, SF3B1, DEK, MYO1C, ERCC6, MYBBP1A and DDX21. Interacts with KIAA1530/UVSSA. Interacts with ELOA and CUL5; the interaction is induced by DNA damaging agents or by inhibitors of RNA polymerase II elongation. Interacts (via WHD region) with RIF1. Interacts with SMARCC2/BAF170, SMARCB1/BAF47 and the neuron-specific chromatin remodeling complex (nBAF complex). Interacts with ERCC5/XPG (via C-terminus); the interaction stimulates ERCC6/CSB binding to DNA repair bubble and ERCC6/CSB ATPase activity. May form a complex composed of RNA polymerase II, ERCC6/CSB and ERCC5/XPG which associates with the DNA repair bubble during transcription-coupled nucleotide excision repair. Interacts with CAND1, CSTF1, DDX3X, DDX5, DDX17, DDX23, DHX36, HDAC1, HNRNPU, MTA2, PRPF3, PSMD3, RBBP4, SFPQ, SMARCA1, SMARCA2, TOP1, USP7 and XRCC5. Post-translationally, phosphorylated in a cell cycle-dependent manner at Ser-158 by cyclin A-CDK2 in response to DNA damage. Phosphorylation at this site promotes the intramolecular interaction of the N-terminal domain with the helicase ATP-binding domain, thereby probably releasing the inhibitory effect of the N-terminal domain on its ATPase activity. Phosphorylation is essential for its chromatin remodeling activity. Ubiquitinated at the C-terminus. Ubiquitination by the CSA complex leads to ERCC6 proteasomal degradation in a UV-dependent manner. Stabilized following interaction with KIAA1530/UVSSA, which promotes recruitment of deubiquitinating enzyme USP7, leading to deubiquitination of ERCC6 thereby preventing UV-induced degradation of ERCC6 by the proteasome.

The protein localises to the nucleus. It is found in the chromosome. The catalysed reaction is ATP + H2O = ADP + phosphate + H(+). Its function is as follows. Essential factor involved in transcription-coupled nucleotide excision repair (TC-NER), a process during which RNA polymerase II-blocking lesions are rapidly removed from the transcribed strand of active genes. Plays a central role in the initiation of the TC-NER process: specifically recognizes and binds RNA polymerase II stalled at a lesion, and mediates recruitment of ERCC8/CSA, initiating DNA damage excision by TFIIH recruitment. Upon DNA-binding, it locally modifies DNA conformation by wrapping the DNA around itself, thereby modifying the interface between stalled RNA polymerase II and DNA. Acts as a chromatin remodeler at DSBs; DNA-dependent ATPase-dependent activity is essential for this function. Plays an important role in regulating the choice of the DNA double-strand breaks (DSBs) repair pathway and G2/M checkpoint activation; DNA-dependent ATPase activity is essential for this function. Regulates the DNA repair pathway choice by inhibiting non-homologous end joining (NHEJ), thereby promoting the homologous recombination (HR)-mediated repair of DSBs during the S/G2 phases of the cell cycle. Mediates the activation of the ATM- and CHEK2-dependent DNA damage responses thus preventing premature entry of cells into mitosis following the induction of DNA DSBs. Remodels chromatin by evicting histones from chromatin flanking DSBs, limiting RIF1 accumulation at DSBs thereby promoting BRCA1-mediated HR. Required for stable recruitment of ELOA and CUL5 to DNA damage sites. Also involved in UV-induced translocation of ERCC8 to the nuclear matrix. Essential for neuronal differentiation and neuritogenesis; regulates transcription and chromatin remodeling activities required during neurogenesis. The chain is DNA excision repair protein ERCC-6 (Ercc6) from Mus musculus (Mouse).